The chain runs to 380 residues: uncharacterized protein (380 aa).

The N-terminal stretch at 1–28 is a signal peptide; sequence MQFLSDTQRMVLSRAVCASFFFFHVAVA. Positions 307–380 constitute an SPOR domain; that stretch reads AGDEKPRGYQ…DAGYETFPLF (74 aa).

This is an uncharacterized protein from Treponema pallidum (strain Nichols).